We begin with the raw amino-acid sequence, 104 residues long: Flagellar hook-basal body complex protein FliE (104 aa).

This sequence belongs to the FliE family.

It is found in the bacterial flagellum basal body. This chain is Flagellar hook-basal body complex protein FliE, found in Pectobacterium carotovorum subsp. carotovorum (strain PC1).